We begin with the raw amino-acid sequence, 194 residues long: Molybdenum cofactor guanylyltransferase (194 aa).

GTP is bound by residues 12–14, K25, N53, D70, and D100; that span reads LAG. Position 100 (D100) interacts with Mg(2+).

It belongs to the MobA family. In terms of assembly, monomer. The cofactor is Mg(2+).

The protein resides in the cytoplasm. It carries out the reaction Mo-molybdopterin + GTP + H(+) = Mo-molybdopterin guanine dinucleotide + diphosphate. Its function is as follows. Transfers a GMP moiety from GTP to Mo-molybdopterin (Mo-MPT) cofactor (Moco or molybdenum cofactor) to form Mo-molybdopterin guanine dinucleotide (Mo-MGD) cofactor. The chain is Molybdenum cofactor guanylyltransferase from Aliivibrio salmonicida (strain LFI1238) (Vibrio salmonicida (strain LFI1238)).